A 264-amino-acid polypeptide reads, in one-letter code: Forkhead box protein pes-1 (264 aa).

Disordered regions lie at residues 15–36 (DLDN…GNSK) and 50–93 (DSST…PTKR). The segment covering 50-64 (DSSTSSSCSVSPASS) has biased composition (low complexity). A compositionally biased stretch (polar residues) spans 70–89 (ESVGQQQSGRNSPVSSSTES). The fork-head DNA-binding region spans 93-186 (RPKYSYNALI…ISNNCGKLRR (94 aa)).

Its subcellular location is the nucleus. The protein resides in the cytoplasm. Its function is as follows. Transcription factor. Plays a role in embryogenesis and later development, perhaps acting redundantly with forkhead protein fkh-2. The sequence is that of Forkhead box protein pes-1 from Caenorhabditis elegans.